A 529-amino-acid polypeptide reads, in one-letter code: Glucose transporter 2A (529 aa).

The segment at 1–22 is disordered; sequence MTERRDNVSHAPDAIEGPNDGA. Residues 1–43 lie on the Cytoplasmic side of the membrane; it reads MTERRDNVSHAPDAIEGPNDGAHAEDTSPGFFSFENLGVAQVQ. A helical membrane pass occupies residues 44-64; it reads VVGGTLNGFSIGFVAVYILLY. At 65-119 the chain is on the extracellular side; that stretch reads EVATNCSLFKTTEACKAVGSYGCEWKDTEVCSWKKECDSDSDGVNPCESLIGYSS. A helical membrane pass occupies residues 120–140; it reads LYSGIFASAMIVGSMVGSIIA. Over 141–152 the chain is Cytoplasmic; sequence GKCITMFGLKKS. Residues 153 to 173 form a helical membrane-spanning segment; that stretch reads FIIVGVMSVVASALNHISVAT. At 174-175 the chain is on the extracellular side; it reads NE. Residues 176 to 196 traverse the membrane as a helical segment; it reads FWVLCAGRVLMGIGLGVVCVI. The Cytoplasmic segment spans residues 197–214; it reads CPMYVNENAHPKLSKVDG. Residues 215–235 form a helical membrane-spanning segment; that stretch reads VLFQVFITFGIMLAAMLGLIL. Over 236-250 the chain is Extracellular; that stretch reads DKTVNYDNDPDMAGR. The chain crosses the membrane as a helical span at residues 251–271; the sequence is FHGFCAVSSVLSVAMFLVGMF. The Cytoplasmic segment spans residues 272-300; sequence LRESTATFSQDDDGKADGGMDPNEYGWGQ. The helical transmembrane segment at 301–321 threads the bilayer; sequence MLWPLFMGAVTAGTLQLTGIN. Topologically, residues 322-339 are extracellular; sequence AVMNYAPKITENLGMDPS. Residues 340-360 form a helical membrane-spanning segment; sequence LGNFLVMAWNFVTSLVAIPLA. Over 361 to 368 the chain is Cytoplasmic; sequence SRFTMRQM. A helical membrane pass occupies residues 369–389; that stretch reads FITCSFVASCMCLFLCGIPVF. Residues 390 to 404 are Extracellular-facing; it reads PGVAEEKVKNGVATT. The helical transmembrane segment at 405–425 threads the bilayer; it reads GIALFIAAFEFGVGSCFFVLA. The Cytoplasmic portion of the chain corresponds to 426–439; sequence QDLFPPSFRPKGSS. The chain crosses the membrane as a helical span at residues 440 to 460; that stretch reads FVVMMQFIFNILINLLYPITT. Residues 461 to 476 lie on the Extracellular side of the membrane; the sequence is EAISGGATGDQDKGQA. The helical transmembrane segment at 477 to 497 threads the bilayer; it reads VVFILFGLIGLICFVLQFFYL. Residues 498 to 529 lie on the Cytoplasmic side of the membrane; sequence YPYDANQDHENDHGTEPVERILSPVDVPTPRN. The interval 508–529 is disordered; it reads NDHGTEPVERILSPVDVPTPRN.

This sequence belongs to the major facilitator superfamily. Sugar transporter (TC 2.A.1.1) family.

The protein resides in the membrane. Its function is as follows. Facilitative glucose transporter. This Trypanosoma brucei brucei protein is Glucose transporter 2A (THT2A).